The following is a 327-amino-acid chain: Pyruvate dehydrogenase E1 component subunit beta (327 aa).

Glu60 is a thiamine diphosphate binding site. K(+) is bound by residues Ile113, Ala161, Ile162, and Asn166.

In terms of assembly, heterodimer of an alpha and a beta chain. Requires thiamine diphosphate as cofactor.

It is found in the plastid. The protein resides in the chloroplast. It carries out the reaction N(6)-[(R)-lipoyl]-L-lysyl-[protein] + pyruvate + H(+) = N(6)-[(R)-S(8)-acetyldihydrolipoyl]-L-lysyl-[protein] + CO2. The pyruvate dehydrogenase complex catalyzes the overall conversion of pyruvate to acetyl-CoA and CO(2). It contains multiple copies of three enzymatic components: pyruvate dehydrogenase (E1), dihydrolipoamide acetyltransferase (E2) and lipoamide dehydrogenase (E3). This is Pyruvate dehydrogenase E1 component subunit beta (pdhB) from Mesostigma viride (Green alga).